The primary structure comprises 691 residues: Lectin-domain containing receptor kinase VI.4 (691 aa).

The first 19 residues, 1 to 19 (MGRAKSMVSLLLVLFLVRA), serve as a signal peptide directing secretion. Residues 20–306 (HVATTETTTE…AKKRGYNGKV (287 aa)) are Extracellular-facing. The segment at 26–273 (TTTEFIFHGF…AHYVMGWSFA (248 aa)) is legume-lectin like. Residues 307 to 327 (IALIVALSTVISIMLVLLFLF) form a helical membrane-spanning segment. Over 328-691 (MMYKKRMQQE…ISSTSLISGR (364 aa)) the chain is Cytoplasmic. The Protein kinase domain maps to 363-641 (FKENRVVGTG…LNRDEDVPEI (279 aa)). ATP-binding positions include 369-377 (VGTGGFGIV) and Lys392. The Proton acceptor role is filled by Asp491.

The protein in the C-terminal section; belongs to the protein kinase superfamily. Ser/Thr protein kinase family. This sequence in the N-terminal section; belongs to the leguminous lectin family.

It is found in the cell membrane. The enzyme catalyses L-seryl-[protein] + ATP = O-phospho-L-seryl-[protein] + ADP + H(+). The catalysed reaction is L-threonyl-[protein] + ATP = O-phospho-L-threonyl-[protein] + ADP + H(+). Its function is as follows. Involved in negative regulation of abscisic acid response in seed germination. In Arabidopsis thaliana (Mouse-ear cress), this protein is Lectin-domain containing receptor kinase VI.4 (LECRK64).